The primary structure comprises 379 residues: Queuine tRNA-ribosyltransferase (379 aa).

The active-site Proton acceptor is D94. Substrate is bound by residues 94-98 (DSGGF), D148, Q191, and G218. Positions 249 to 255 (GVGSPDA) are RNA binding. Catalysis depends on D268, which acts as the Nucleophile. Residues 273–277 (TRIAR) are RNA binding; important for wobble base 34 recognition. Positions 306, 308, 311, and 337 each coordinate Zn(2+).

Belongs to the queuine tRNA-ribosyltransferase family. In terms of assembly, homodimer. Within each dimer, one monomer is responsible for RNA recognition and catalysis, while the other monomer binds to the replacement base PreQ1. Requires Zn(2+) as cofactor.

The enzyme catalyses 7-aminomethyl-7-carbaguanine + guanosine(34) in tRNA = 7-aminomethyl-7-carbaguanosine(34) in tRNA + guanine. The protein operates within tRNA modification; tRNA-queuosine biosynthesis. Functionally, catalyzes the base-exchange of a guanine (G) residue with the queuine precursor 7-aminomethyl-7-deazaguanine (PreQ1) at position 34 (anticodon wobble position) in tRNAs with GU(N) anticodons (tRNA-Asp, -Asn, -His and -Tyr). Catalysis occurs through a double-displacement mechanism. The nucleophile active site attacks the C1' of nucleotide 34 to detach the guanine base from the RNA, forming a covalent enzyme-RNA intermediate. The proton acceptor active site deprotonates the incoming PreQ1, allowing a nucleophilic attack on the C1' of the ribose to form the product. After dissociation, two additional enzymatic reactions on the tRNA convert PreQ1 to queuine (Q), resulting in the hypermodified nucleoside queuosine (7-(((4,5-cis-dihydroxy-2-cyclopenten-1-yl)amino)methyl)-7-deazaguanosine). The polypeptide is Queuine tRNA-ribosyltransferase (Oceanobacillus iheyensis (strain DSM 14371 / CIP 107618 / JCM 11309 / KCTC 3954 / HTE831)).